The following is a 486-amino-acid chain: Glutamyl-tRNA(Gln) amidotransferase subunit A (486 aa).

Active-site charge relay system residues include lysine 76 and serine 151. Residue serine 175 is the Acyl-ester intermediate of the active site.

The protein belongs to the amidase family. GatA subfamily. Heterotrimer of A, B and C subunits.

It catalyses the reaction L-glutamyl-tRNA(Gln) + L-glutamine + ATP + H2O = L-glutaminyl-tRNA(Gln) + L-glutamate + ADP + phosphate + H(+). In terms of biological role, allows the formation of correctly charged Gln-tRNA(Gln) through the transamidation of misacylated Glu-tRNA(Gln) in organisms which lack glutaminyl-tRNA synthetase. The reaction takes place in the presence of glutamine and ATP through an activated gamma-phospho-Glu-tRNA(Gln). The protein is Glutamyl-tRNA(Gln) amidotransferase subunit A of Nitrosomonas eutropha (strain DSM 101675 / C91 / Nm57).